The following is a 61-amino-acid chain: Metallothionein-1 (61 aa).

Residue methionine 1 is modified to N-acetylmethionine. The beta stretch occupies residues 1–29 (MDPNCSCPTGGSCTCAGSCKCKACRCPSC). A divalent metal cation contacts are provided by cysteine 5, cysteine 7, cysteine 13, cysteine 15, cysteine 19, cysteine 21, cysteine 24, cysteine 26, cysteine 29, cysteine 33, cysteine 34, cysteine 36, cysteine 37, cysteine 41, cysteine 44, cysteine 48, cysteine 50, cysteine 57, cysteine 59, and cysteine 60. The segment at 30–61 (KKSCCSCCPVGCAKCAQGCVCKGASDKCSCCA) is alpha.

Belongs to the metallothionein superfamily. Type 1 family. Monomer.

Its function is as follows. Metallothioneins have a high content of cysteine residues that bind various heavy metals; these proteins are transcriptionally regulated by both heavy metals and glucocorticoids. In Bos taurus (Bovine), this protein is Metallothionein-1 (MT1).